The sequence spans 217 residues: Small ribosomal subunit protein uS3c (217 aa).

The KH type-2 domain occupies 46 to 117 (VQKHIKNSSN…RLRMTLIEIA (72 aa)).

Belongs to the universal ribosomal protein uS3 family. As to quaternary structure, part of the 30S ribosomal subunit.

Its subcellular location is the plastid. The protein localises to the chloroplast. The chain is Small ribosomal subunit protein uS3c (rps3) from Marchantia polymorpha (Common liverwort).